Reading from the N-terminus, the 197-residue chain is Imidazoleglycerol-phosphate dehydratase (197 aa).

This sequence belongs to the imidazoleglycerol-phosphate dehydratase family.

It localises to the cytoplasm. The catalysed reaction is D-erythro-1-(imidazol-4-yl)glycerol 3-phosphate = 3-(imidazol-4-yl)-2-oxopropyl phosphate + H2O. The protein operates within amino-acid biosynthesis; L-histidine biosynthesis; L-histidine from 5-phospho-alpha-D-ribose 1-diphosphate: step 6/9. In Pseudomonas fluorescens (strain SBW25), this protein is Imidazoleglycerol-phosphate dehydratase.